The following is a 200-amino-acid chain: Small ribosomal subunit protein uS5 (200 aa).

Positions 1 to 12 (MGRPRTSQTRGQ) are enriched in polar residues. Positions 1 to 49 (MGRPRTSQTRGQGPSGATGGNPRGGGSTTRERDARGARPGERDGGSEIQ) are disordered. The segment covering 13-27 (GPSGATGGNPRGGGS) has biased composition (gly residues). The segment covering 29–49 (TRERDARGARPGERDGGSEIQ) has biased composition (basic and acidic residues). Residues 48–111 (IQDRVVQIRR…EKARHAMFDV (64 aa)) enclose the S5 DRBM domain.

It belongs to the universal ribosomal protein uS5 family. Part of the 30S ribosomal subunit. Contacts proteins S4 and S8.

With S4 and S12 plays an important role in translational accuracy. Functionally, located at the back of the 30S subunit body where it stabilizes the conformation of the head with respect to the body. The polypeptide is Small ribosomal subunit protein uS5 (Rubrobacter xylanophilus (strain DSM 9941 / JCM 11954 / NBRC 16129 / PRD-1)).